The following is a 437-amino-acid chain: Enolase (437 aa).

Gln-162 serves as a coordination point for (2R)-2-phosphoglycerate. Glu-204 (proton donor) is an active-site residue. Residues Asp-251, Glu-297, and Asp-324 each contribute to the Mg(2+) site. (2R)-2-phosphoglycerate-binding residues include Lys-349, Arg-378, Ser-379, and Lys-400. The Proton acceptor role is filled by Lys-349.

Belongs to the enolase family. Mg(2+) is required as a cofactor.

Its subcellular location is the cytoplasm. The protein localises to the secreted. It is found in the cell surface. The catalysed reaction is (2R)-2-phosphoglycerate = phosphoenolpyruvate + H2O. Its pathway is carbohydrate degradation; glycolysis; pyruvate from D-glyceraldehyde 3-phosphate: step 4/5. In terms of biological role, catalyzes the reversible conversion of 2-phosphoglycerate (2-PG) into phosphoenolpyruvate (PEP). It is essential for the degradation of carbohydrates via glycolysis. This is Enolase from Chlorobaculum parvum (strain DSM 263 / NCIMB 8327) (Chlorobium vibrioforme subsp. thiosulfatophilum).